A 292-amino-acid polypeptide reads, in one-letter code: MLVKIGTRGSKLAVVQALEAKQKLLDSFPNLSIEIVKIKTSGDKYANANLAEIGGKGLFIKEIEAELLENNIDMAVHSLKDVPAFFSWGLTIPCVLERLSPCDAFISHKHNSLESLPQQATIATSAIRRKVQLLNFRPDLNIVPLRGNVTTRLQNQSFDGIILAEAGLIRLEKHHLITEVLPPKVMLSAVGQGAICIQCRRNDVKIIDLLEKINNNMSFIGVKSERSFMKTVNGSCFTPLAALAEYVSENMLYLRCMLADGKNIYFTERTSFIEDAEKMGMDAGLELKSKCL.

Cys236 bears the S-(dipyrrolylmethanemethyl)cysteine mark.

Belongs to the HMBS family. As to quaternary structure, monomer. Dipyrromethane serves as cofactor.

The enzyme catalyses 4 porphobilinogen + H2O = hydroxymethylbilane + 4 NH4(+). The protein operates within porphyrin-containing compound metabolism; protoporphyrin-IX biosynthesis; coproporphyrinogen-III from 5-aminolevulinate: step 2/4. Functionally, tetrapolymerization of the monopyrrole PBG into the hydroxymethylbilane pre-uroporphyrinogen in several discrete steps. This chain is Porphobilinogen deaminase, found in Wolbachia sp. subsp. Drosophila simulans (strain wRi).